The chain runs to 216 residues: Large ribosomal subunit protein uL3 (216 aa).

The disordered stretch occupies residues 137-158 (GASHGAHKNHRKPGSIGGASTP).

It belongs to the universal ribosomal protein uL3 family. In terms of assembly, part of the 50S ribosomal subunit. Forms a cluster with proteins L14 and L19.

Functionally, one of the primary rRNA binding proteins, it binds directly near the 3'-end of the 23S rRNA, where it nucleates assembly of the 50S subunit. This chain is Large ribosomal subunit protein uL3, found in Arthrobacter sp. (strain FB24).